We begin with the raw amino-acid sequence, 413 residues long: CinA-like protein (413 aa).

The protein belongs to the CinA family.

This chain is CinA-like protein, found in Desulfosudis oleivorans (strain DSM 6200 / JCM 39069 / Hxd3) (Desulfococcus oleovorans).